Here is a 106-residue protein sequence, read N- to C-terminus: Glycine/glutamate-rich protein sgp1 (106 aa).

The first 20 residues, 1–20, serve as a signal peptide directing secretion; sequence MKYSLIFILTLACLIASSLA. The segment at 20 to 66 is disordered; the sequence is ARPEGEEKPADDAAGDKKEEGAEGDKTAAGGDEGFTGGDGKNAGGAG. Positions 22 to 45 are enriched in basic and acidic residues; the sequence is PEGEEKPADDAAGDKKEEGAEGDK. Positions 50–66 are enriched in gly residues; the sequence is GDEGFTGGDGKNAGGAG.

The protein resides in the secreted. The polypeptide is Glycine/glutamate-rich protein sgp1 (sgp1) (Glossina morsitans morsitans (Savannah tsetse fly)).